Reading from the N-terminus, the 162-residue chain is Cytochrome c-type biogenesis protein CcmE (162 aa).

The Cytoplasmic segment spans residues 1–8 (MNPVRKKR). A helical; Signal-anchor for type II membrane protein membrane pass occupies residues 9–29 (LIIVLAIVAGVGAAVGLALSA). Residues 30-162 (LQQNINLFYT…GETSYNQEGK (133 aa)) are Periplasmic-facing. Positions 124 and 128 each coordinate heme. Positions 139–148 (DSGQLKHYEN) are enriched in basic and acidic residues. The disordered stretch occupies residues 139–162 (DSGQLKHYENGKAAGETSYNQEGK).

It belongs to the CcmE/CycJ family.

The protein resides in the cell inner membrane. In terms of biological role, heme chaperone required for the biogenesis of c-type cytochromes. Transiently binds heme delivered by CcmC and transfers the heme to apo-cytochromes in a process facilitated by CcmF and CcmH. This Pseudomonas aeruginosa (strain ATCC 15692 / DSM 22644 / CIP 104116 / JCM 14847 / LMG 12228 / 1C / PRS 101 / PAO1) protein is Cytochrome c-type biogenesis protein CcmE.